The chain runs to 205 residues: Thymidylate kinase (205 aa).

10 to 17 (GLEGAGKS) contributes to the ATP binding site.

This sequence belongs to the thymidylate kinase family.

It catalyses the reaction dTMP + ATP = dTDP + ADP. Its function is as follows. Phosphorylation of dTMP to form dTDP in both de novo and salvage pathways of dTTP synthesis. This Idiomarina loihiensis (strain ATCC BAA-735 / DSM 15497 / L2-TR) protein is Thymidylate kinase.